Reading from the N-terminus, the 243-residue chain is Coenzyme F420 hydrogenase subunit gamma (243 aa).

4Fe-4S ferredoxin-type domains lie at Ile182–Glu210 and Ala211–Lys241. [4Fe-4S] cluster contacts are provided by Cys191, Cys194, Cys197, Cys201, Cys220, Cys223, Cys226, and Cys230.

It belongs to the FrhG family. In terms of assembly, complex of alpha, beta and gamma subunits. Requires Ni(2+) as cofactor. Iron-sulfur cluster is required as a cofactor. It depends on FAD as a cofactor.

It catalyses the reaction oxidized coenzyme F420-(gamma-L-Glu)(n) + H2 + H(+) = reduced coenzyme F420-(gamma-L-Glu)(n). Reduces the physiological low-potential two-electron acceptor coenzyme F420, and the artificial one-electron acceptor methylviologen. The chain is Coenzyme F420 hydrogenase subunit gamma (frhG) from Methanococcus voltae.